Reading from the N-terminus, the 163-residue chain is Phosphopantetheine adenylyltransferase (163 aa).

Residue serine 10 coordinates substrate. ATP contacts are provided by residues 10 to 11 and histidine 18; that span reads SF. 3 residues coordinate substrate: lysine 42, leucine 74, and arginine 88. Residues 89–91, glutamate 99, and 124–130 each bind ATP; these read GLR and YSFLSSS.

The protein belongs to the bacterial CoaD family. As to quaternary structure, homohexamer. Requires Mg(2+) as cofactor.

It localises to the cytoplasm. The enzyme catalyses (R)-4'-phosphopantetheine + ATP + H(+) = 3'-dephospho-CoA + diphosphate. It functions in the pathway cofactor biosynthesis; coenzyme A biosynthesis; CoA from (R)-pantothenate: step 4/5. In terms of biological role, reversibly transfers an adenylyl group from ATP to 4'-phosphopantetheine, yielding dephospho-CoA (dPCoA) and pyrophosphate. The chain is Phosphopantetheine adenylyltransferase from Bacillus anthracis (strain A0248).